Here is a 447-residue protein sequence, read N- to C-terminus: uncharacterized protein (447 aa).

Transmembrane regions (helical) follow at residues I17–A37, V40–M60, I95–I115, W118–V138, A154–V174, G200–V220, I243–V263, A289–Y311, M333–A353, L361–L381, Y393–G415, and T419–V441.

It belongs to the amino acid-polyamine-organocation (APC) superfamily.

The protein localises to the cell membrane. Functionally, may participate in leucine metabolism. May transport leucine or a compound related to leucine metabolism. This is an uncharacterized protein from Bacillus subtilis (strain 168).